Reading from the N-terminus, the 494-residue chain is NADH-quinone oxidoreductase subunit N (494 aa).

14 helical membrane-spanning segments follow: residues 9–29, 36–56, 73–93, 107–127, 131–151, 166–186, 209–229, 241–261, 278–298, 304–324, 339–359, 382–402, 416–436, and 469–489; these read VIPE…DLFL, LTYV…LSDF, PMSN…LVYS, LGGE…VMMS, FLII…LVAF, FVLG…LYGA, LIFG…AVPF, PTAV…AITI, MLTI…IMQT, LAYS…SGVV, MFYV…IMLL, FAFV…VVGF, GQIW…FYYL, and ALLA…AAII.

Belongs to the complex I subunit 2 family. In terms of assembly, NDH-1 is composed of 14 different subunits. Subunits NuoA, H, J, K, L, M, N constitute the membrane sector of the complex.

It localises to the cell inner membrane. The enzyme catalyses a quinone + NADH + 5 H(+)(in) = a quinol + NAD(+) + 4 H(+)(out). NDH-1 shuttles electrons from NADH, via FMN and iron-sulfur (Fe-S) centers, to quinones in the respiratory chain. The immediate electron acceptor for the enzyme in this species is believed to be ubiquinone. Couples the redox reaction to proton translocation (for every two electrons transferred, four hydrogen ions are translocated across the cytoplasmic membrane), and thus conserves the redox energy in a proton gradient. The chain is NADH-quinone oxidoreductase subunit N from Herminiimonas arsenicoxydans.